The chain runs to 371 residues: Queuine tRNA-ribosyltransferase (371 aa).

Asp90 (proton acceptor) is an active-site residue. Residues 90–94, Asp144, Gln188, and Gly215 each bind substrate; that span reads DSGGF. The interval 246–252 is RNA binding; the sequence is GVGTPED. Catalysis depends on Asp265, which acts as the Nucleophile. The RNA binding; important for wobble base 34 recognition stretch occupies residues 270–274; it reads TRNAR. Positions 303, 305, 308, and 334 each coordinate Zn(2+).

Belongs to the queuine tRNA-ribosyltransferase family. Homodimer. Within each dimer, one monomer is responsible for RNA recognition and catalysis, while the other monomer binds to the replacement base PreQ1. Requires Zn(2+) as cofactor.

It carries out the reaction 7-aminomethyl-7-carbaguanine + guanosine(34) in tRNA = 7-aminomethyl-7-carbaguanosine(34) in tRNA + guanine. It functions in the pathway tRNA modification; tRNA-queuosine biosynthesis. Functionally, catalyzes the base-exchange of a guanine (G) residue with the queuine precursor 7-aminomethyl-7-deazaguanine (PreQ1) at position 34 (anticodon wobble position) in tRNAs with GU(N) anticodons (tRNA-Asp, -Asn, -His and -Tyr). Catalysis occurs through a double-displacement mechanism. The nucleophile active site attacks the C1' of nucleotide 34 to detach the guanine base from the RNA, forming a covalent enzyme-RNA intermediate. The proton acceptor active site deprotonates the incoming PreQ1, allowing a nucleophilic attack on the C1' of the ribose to form the product. After dissociation, two additional enzymatic reactions on the tRNA convert PreQ1 to queuine (Q), resulting in the hypermodified nucleoside queuosine (7-(((4,5-cis-dihydroxy-2-cyclopenten-1-yl)amino)methyl)-7-deazaguanosine). The chain is Queuine tRNA-ribosyltransferase from Neisseria gonorrhoeae (strain NCCP11945).